The following is a 311-amino-acid chain: Urease accessory protein UreD (311 aa).

It belongs to the UreD family. UreD, UreF and UreG form a complex that acts as a GTP-hydrolysis-dependent molecular chaperone, activating the urease apoprotein by helping to assemble the nickel containing metallocenter of UreC. The UreE protein probably delivers the nickel.

Its subcellular location is the cytoplasm. Functionally, required for maturation of urease via the functional incorporation of the urease nickel metallocenter. The sequence is that of Urease accessory protein UreD from Synechococcus sp. (strain CC9902).